A 260-amino-acid chain; its full sequence is NAD-capped RNA hydrolase NudC (260 aa).

K25 and R69 together coordinate substrate. Zn(2+) contacts are provided by C98 and C101. A substrate-binding site is contributed by E111. 2 residues coordinate Zn(2+): C116 and C119. Y124 provides a ligand contact to substrate. Positions 125–248 (PQIAPCVIVA…TVARRLIEDT (124 aa)) constitute a Nudix hydrolase domain. Residues A158, E174, and E178 each contribute to the a divalent metal cation site. The short motif at 159–180 (GFVEVGETLEQAVSREVLEESN) is the Nudix box element. 192 to 199 (QPWPFPHS) contributes to the substrate binding site. Residue E219 participates in a divalent metal cation binding. Residue A241 coordinates substrate.

This sequence belongs to the Nudix hydrolase family. NudC subfamily. As to quaternary structure, homodimer. Requires Mg(2+) as cofactor. The cofactor is Mn(2+). It depends on Zn(2+) as a cofactor.

It catalyses the reaction a 5'-end NAD(+)-phospho-ribonucleoside in mRNA + H2O = a 5'-end phospho-adenosine-phospho-ribonucleoside in mRNA + beta-nicotinamide D-ribonucleotide + 2 H(+). The enzyme catalyses NAD(+) + H2O = beta-nicotinamide D-ribonucleotide + AMP + 2 H(+). The catalysed reaction is NADH + H2O = reduced beta-nicotinamide D-ribonucleotide + AMP + 2 H(+). Its function is as follows. mRNA decapping enzyme that specifically removes the nicotinamide adenine dinucleotide (NAD) cap from a subset of mRNAs by hydrolyzing the diphosphate linkage to produce nicotinamide mononucleotide (NMN) and 5' monophosphate mRNA. The NAD-cap is present at the 5'-end of some mRNAs and stabilizes RNA against 5'-processing. Has preference for mRNAs with a 5'-end purine. Catalyzes the hydrolysis of a broad range of dinucleotide pyrophosphates. The chain is NAD-capped RNA hydrolase NudC from Yersinia pseudotuberculosis serotype O:1b (strain IP 31758).